A 483-amino-acid polypeptide reads, in one-letter code: Acetyl-coenzyme A carboxylase carboxyl transferase subunit beta, chloroplastic (483 aa).

One can recognise a CoA carboxyltransferase N-terminal domain in the interval 221–483 (LWVQCENCYG…FQFHGFFPRP (263 aa)). Zn(2+)-binding residues include cysteine 225, cysteine 228, cysteine 244, and cysteine 247. Residues 225-247 (CENCYGLNYKKFFSSKMNICEQC) form a C4-type zinc finger.

Belongs to the AccD/PCCB family. As to quaternary structure, acetyl-CoA carboxylase is a heterohexamer composed of biotin carboxyl carrier protein, biotin carboxylase and 2 subunits each of ACCase subunit alpha and ACCase plastid-coded subunit beta (accD). It depends on Zn(2+) as a cofactor.

Its subcellular location is the plastid. It localises to the chloroplast stroma. It catalyses the reaction N(6)-carboxybiotinyl-L-lysyl-[protein] + acetyl-CoA = N(6)-biotinyl-L-lysyl-[protein] + malonyl-CoA. The protein operates within lipid metabolism; malonyl-CoA biosynthesis; malonyl-CoA from acetyl-CoA: step 1/1. In terms of biological role, component of the acetyl coenzyme A carboxylase (ACC) complex. Biotin carboxylase (BC) catalyzes the carboxylation of biotin on its carrier protein (BCCP) and then the CO(2) group is transferred by the transcarboxylase to acetyl-CoA to form malonyl-CoA. The protein is Acetyl-coenzyme A carboxylase carboxyl transferase subunit beta, chloroplastic of Nuphar advena (Common spatterdock).